The chain runs to 388 residues: Chitinase 4 (388 aa).

The GH18 domain maps to 22-375 (FKTCVYFSNW…KNFVDQLGGV (354 aa)). Asparagine 30 and asparagine 82 each carry an N-linked (GlcNAc...) asparagine glycan. Residues 82–83 (NQ) and 109–112 (GGWG) contribute to the chitin site. N-linked (GlcNAc...) asparagine glycosylation is found at asparagine 123 and asparagine 132. Catalysis depends on glutamate 151, which acts as the Proton donor. Tyrosine 152 contacts chitin. Asparagine 155 carries N-linked (GlcNAc...) asparagine glycosylation. 208–211 (MCYD) serves as a coordination point for chitin. Asparagine 237 carries N-linked (GlcNAc...) asparagine glycosylation. Tryptophan 350 is a chitin binding site.

Belongs to the glycosyl hydrolase 18 family. Chitinase class V subfamily.

The protein resides in the secreted. The enzyme catalyses Random endo-hydrolysis of N-acetyl-beta-D-glucosaminide (1-&gt;4)-beta-linkages in chitin and chitodextrins.. In terms of biological role, chitinase involved in the remodeling of chitin in the fungal cell wall. Plays a role in sporulation. This Candida albicans (strain SC5314 / ATCC MYA-2876) (Yeast) protein is Chitinase 4 (CHT4).